The primary structure comprises 170 residues: NADH-quinone oxidoreductase subunit B (170 aa).

Positions 37, 38, 102, and 131 each coordinate [4Fe-4S] cluster.

The protein belongs to the complex I 20 kDa subunit family. In terms of assembly, NDH-1 is composed of 14 different subunits. Subunits NuoB, C, D, E, F, and G constitute the peripheral sector of the complex. The cofactor is [4Fe-4S] cluster.

Its subcellular location is the cell inner membrane. The catalysed reaction is a quinone + NADH + 5 H(+)(in) = a quinol + NAD(+) + 4 H(+)(out). Functionally, NDH-1 shuttles electrons from NADH, via FMN and iron-sulfur (Fe-S) centers, to quinones in the respiratory chain. The immediate electron acceptor for the enzyme in this species is believed to be ubiquinone. Couples the redox reaction to proton translocation (for every two electrons transferred, four hydrogen ions are translocated across the cytoplasmic membrane), and thus conserves the redox energy in a proton gradient. The polypeptide is NADH-quinone oxidoreductase subunit B (Geobacter metallireducens (strain ATCC 53774 / DSM 7210 / GS-15)).